A 320-amino-acid chain; its full sequence is Atrochrysone carboxyl ACP thioesterase (320 aa).

Positions 103, 105, 107, and 108 each coordinate Zn(2+). The Proton donor/acceptor role is filled by D107.

It belongs to the metallo-beta-lactamase superfamily. Zn(2+) serves as cofactor.

It carries out the reaction atrochrysone carboxyl-[ACP] + H2O = atrochrysone carboxylate + holo-[ACP] + H(+). It participates in secondary metabolite biosynthesis. Atrochrysone carboxyl ACP thioesterase; part of the gene cluster that mediates the biosynthesis of geodin, an intermediate in the biosynthesis of other natural products. The pathway begins with the synthesis of atrochrysone thioester by the polyketide synthase (PKS) gedC. The atrochrysone carboxyl ACP thioesterase gedB then breaks the thioester bond and releases the atrochrysone carboxylic acid from gedC. The atrochrysone carboxylic acid is then converted to atrochrysone which is further transformed into emodinanthrone. The next step is performed by the emodinanthrone oxygenase gedH that catalyzes the oxidation of emodinanthrone to emodin. Emodin O-methyltransferase encoded probably by gedA then catalyzes methylation of the 8-hydroxy group of emodin to form questin. Ring cleavage of questin by questin oxidase gedK leads to desmethylsulochrin via several intermediates including questin epoxide. Another methylation step probably catalyzed by methyltransferase gedG leads to the formation of sulochrin which is further converted to dihydrogeodin by the sulochrin halogenase gedL. Finally, the dihydrogeodin oxidase gedJ catalyzes the stereospecific phenol oxidative coupling reaction converting dihydrogeodin to geodin. This is Atrochrysone carboxyl ACP thioesterase from Aspergillus terreus (strain NIH 2624 / FGSC A1156).